We begin with the raw amino-acid sequence, 326 residues long: MTKAKSFLKEIDYSKKEIEDFIDLAMQFKKLKKERIPHRYFDGLNIALIFEKTSTRTRSAFTVAGQDLGMNVSYLGKDDIQLGKKESLVDTAKVLGTMFDGIEYRGFKQESVELLAEFSGVPVWNGLTDTWHPTQMIADFMTVKEHFGKFEDLTLAYLGDGRNNVANSLLVTSAILGINVKIIAPKELQPESEIVALAKKHQTKGLITITDDTAAVADTDILYTDIWVSMGEKVDFKERIDLLLPYQINQALLNRVRKPNALVLHCLPAFHDLNTEIGREIYERYGYKELEMTDAVFQKHSQTIFQEAENRLHSIKAIMYHSLKNI.

Carbamoyl phosphate contacts are provided by residues 54–57 (STRT), Gln81, Arg105, and 132–135 (HPTQ). Residues Asn164, Asp225, and 229-230 (SM) each bind L-ornithine. Residues 266-267 (CL) and Arg311 contribute to the carbamoyl phosphate site.

Belongs to the aspartate/ornithine carbamoyltransferase superfamily. OTCase family.

The protein resides in the cytoplasm. The enzyme catalyses carbamoyl phosphate + L-ornithine = L-citrulline + phosphate + H(+). It functions in the pathway amino-acid biosynthesis; L-arginine biosynthesis; L-arginine from L-ornithine and carbamoyl phosphate: step 1/3. In terms of biological role, reversibly catalyzes the transfer of the carbamoyl group from carbamoyl phosphate (CP) to the N(epsilon) atom of ornithine (ORN) to produce L-citrulline. The chain is Ornithine carbamoyltransferase (argF) from Streptococcus mutans serotype c (strain ATCC 700610 / UA159).